The chain runs to 129 residues: Small ribosomal subunit protein eS6 (129 aa).

Residues 53 to 88 are disordered; the sequence is TGGSDTSGRPMRPDVRGVTTKEIMSDGGVGFEPTTD.

The protein belongs to the eukaryotic ribosomal protein eS6 family.

The protein is Small ribosomal subunit protein eS6 (rps6e) of Haloarcula marismortui (strain ATCC 43049 / DSM 3752 / JCM 8966 / VKM B-1809) (Halobacterium marismortui).